A 78-amino-acid polypeptide reads, in one-letter code: Small ribosomal subunit protein bS18 (78 aa).

This sequence belongs to the bacterial ribosomal protein bS18 family. Part of the 30S ribosomal subunit. Forms a tight heterodimer with protein bS6.

Binds as a heterodimer with protein bS6 to the central domain of the 16S rRNA, where it helps stabilize the platform of the 30S subunit. This chain is Small ribosomal subunit protein bS18, found in Rhodospirillum rubrum (strain ATCC 11170 / ATH 1.1.1 / DSM 467 / LMG 4362 / NCIMB 8255 / S1).